Reading from the N-terminus, the 141-residue chain is Hemoglobin subunit alpha-1 (141 aa).

Residues 1 to 141 (VLTEDDKNHI…VAKTLVAHYR (141 aa)) enclose the Globin domain. His-58 is a binding site for O2. His-87 contacts heme b.

This sequence belongs to the globin family. In terms of assembly, heterotetramer of two alpha chains and two beta chains. In terms of tissue distribution, red blood cells.

Involved in oxygen transport from the lung to the various peripheral tissues. The polypeptide is Hemoglobin subunit alpha-1 (Iguana iguana (Common iguana)).